Consider the following 1133-residue polypeptide: DNA-directed RNA polymerase subunit beta (1133 aa).

The disordered stretch occupies residues 1085–1133; it reads ADVSSRHTPSRPTYESVTSEDLSPAAGGTFTLARRSREEDEDREEEDDF. The span at 1090-1105 shows a compositional bias: polar residues; that stretch reads RHTPSRPTYESVTSED. Acidic residues predominate over residues 1123-1133; that stretch reads EDEDREEEDDF.

It belongs to the RNA polymerase beta chain family. As to quaternary structure, in cyanobacteria the RNAP catalytic core is composed of 2 alpha, 1 beta, 1 beta', 1 gamma and 1 omega subunit. When a sigma factor is associated with the core the holoenzyme is formed, which can initiate transcription.

It catalyses the reaction RNA(n) + a ribonucleoside 5'-triphosphate = RNA(n+1) + diphosphate. DNA-dependent RNA polymerase catalyzes the transcription of DNA into RNA using the four ribonucleoside triphosphates as substrates. The polypeptide is DNA-directed RNA polymerase subunit beta (Synechococcus sp. (strain JA-3-3Ab) (Cyanobacteria bacterium Yellowstone A-Prime)).